A 142-amino-acid chain; its full sequence is Small ribosomal subunit protein uS9 (142 aa).

It belongs to the universal ribosomal protein uS9 family. Component of the small ribosomal subunit. Mature ribosomes consist of a small (40S) and a large (60S) subunit. The 40S subunit contains about 32 different proteins and 1 molecule of RNA (18S). The 60S subunit contains 45 different proteins and 3 molecules of RNA (25S, 5.8S and 5S).

The protein resides in the cytoplasm. In terms of biological role, component of the ribosome, a large ribonucleoprotein complex responsible for the synthesis of proteins in the cell. The small ribosomal subunit (SSU) binds messenger RNAs (mRNAs) and translates the encoded message by selecting cognate aminoacyl-transfer RNA (tRNA) molecules. The large subunit (LSU) contains the ribosomal catalytic site termed the peptidyl transferase center (PTC), which catalyzes the formation of peptide bonds, thereby polymerizing the amino acids delivered by tRNAs into a polypeptide chain. The nascent polypeptides leave the ribosome through a tunnel in the LSU and interact with protein factors that function in enzymatic processing, targeting, and the membrane insertion of nascent chains at the exit of the ribosomal tunnel. This Candida albicans (strain SC5314 / ATCC MYA-2876) (Yeast) protein is Small ribosomal subunit protein uS9 (RPS16A).